The primary structure comprises 546 residues: Hexose oxidase (546 aa).

One can recognise an FAD-binding PCMH-type domain in the interval 40-222 (IGTNIDFVYV…TKYYFKDLPM (183 aa)). A cross-link (6-(S-cysteinyl)-8alpha-(pros-histidyl)-FAD (His-Cys)) is located at residues 79–138 (HCYEDFVFDECVKAIINVTGLVESGYDDDRGYFVSSGDTNWGSFKTLFRDHGRVLPGGSC). Residues Asn95 and Asn358 are each glycosylated (N-linked (GlcNAc...) asparagine).

It belongs to the oxygen-dependent FAD-linked oxidoreductase family. Homodimer. FAD is required as a cofactor. Cleaved into 40 kDa and 29 kDa cleavage products, but the 2 polypeptide chains do not separate and seem to be physically linked together. Post-translationally, the FAD cofactor is bound via a bicovalent 6-S-cysteinyl, 8alpha-N1-histidyl FAD linkage.

It catalyses the reaction beta-D-glucose + O2 = D-glucono-1,5-lactone + H2O2. The enzyme catalyses D-galactose + O2 = D-galactono-1,5-lactone + H2O2. The catalysed reaction is D-maltose + O2 = D-maltobiono-1,5-lactone + H2O2. It carries out the reaction D-cellobiose + O2 = D-cellobiono-1,5-lactone + H2O2. It catalyses the reaction beta-lactose + O2 = lactobiono-1,5-lactone + H2O2. Functionally, catalyzes the selective oxidation of C1 hydroxyl moieties on mono- and disaccharides with concomitant reduction of molecular oxygen to hydrogen peroxide. This results in the formation of the corresponding lactones, which typically undergo spontaneous hydrolysis. Hexose oxidase is able to oxidize a variety of substrates including D-glucose, D-galactose, maltose, cellobiose, and lactose. The chain is Hexose oxidase (HOX) from Chondrus crispus (Carrageen Irish moss).